The primary structure comprises 720 residues: Polyribonucleotide nucleotidyltransferase (720 aa).

Mg(2+) is bound by residues D486 and D492. Residues 553 to 612 form the KH domain; it reads PRITVINVPKEKIREVIGTGGKVIREIVEFSGAKIDIEDDGTIKIASTSEESTQKAIDRI. Residues 622–690 form the S1 motif domain; it reads GKIYNGKVVK…DRGKVKLSMR (69 aa). Residues 698-720 form a disordered region; the sequence is EDISDKVGPKGGRGGRGEGDLAE.

This sequence belongs to the polyribonucleotide nucleotidyltransferase family. Mg(2+) is required as a cofactor.

It localises to the cytoplasm. It carries out the reaction RNA(n+1) + phosphate = RNA(n) + a ribonucleoside 5'-diphosphate. Functionally, involved in mRNA degradation. Catalyzes the phosphorolysis of single-stranded polyribonucleotides processively in the 3'- to 5'-direction. This Granulibacter bethesdensis (strain ATCC BAA-1260 / CGDNIH1) protein is Polyribonucleotide nucleotidyltransferase.